Reading from the N-terminus, the 210-residue chain is Orotate phosphoribosyltransferase (210 aa).

5-phospho-alpha-D-ribose 1-diphosphate-binding positions include Arg97, Lys98, and Asn125–Ser133. 2 residues coordinate orotate: Ser129 and Arg157.

It belongs to the purine/pyrimidine phosphoribosyltransferase family. PyrE subfamily. In terms of assembly, homodimer. It depends on Mg(2+) as a cofactor.

It catalyses the reaction orotidine 5'-phosphate + diphosphate = orotate + 5-phospho-alpha-D-ribose 1-diphosphate. Its pathway is pyrimidine metabolism; UMP biosynthesis via de novo pathway; UMP from orotate: step 1/2. Its function is as follows. Catalyzes the transfer of a ribosyl phosphate group from 5-phosphoribose 1-diphosphate to orotate, leading to the formation of orotidine monophosphate (OMP). This is Orotate phosphoribosyltransferase from Chlamydia pneumoniae (Chlamydophila pneumoniae).